Reading from the N-terminus, the 509-residue chain is ATP synthase subunit alpha (509 aa).

169 to 176 (GDRQTGKT) contributes to the ATP binding site.

This sequence belongs to the ATPase alpha/beta chains family. F-type ATPases have 2 components, CF(1) - the catalytic core - and CF(0) - the membrane proton channel. CF(1) has five subunits: alpha(3), beta(3), gamma(1), delta(1), epsilon(1). CF(0) has three main subunits: a(1), b(2) and c(9-12). The alpha and beta chains form an alternating ring which encloses part of the gamma chain. CF(1) is attached to CF(0) by a central stalk formed by the gamma and epsilon chains, while a peripheral stalk is formed by the delta and b chains.

The protein localises to the cell inner membrane. The enzyme catalyses ATP + H2O + 4 H(+)(in) = ADP + phosphate + 5 H(+)(out). Functionally, produces ATP from ADP in the presence of a proton gradient across the membrane. The alpha chain is a regulatory subunit. This is ATP synthase subunit alpha from Sinorhizobium fredii (strain NBRC 101917 / NGR234).